A 326-amino-acid chain; its full sequence is Vitamin B12 import system permease protein BtuC (326 aa).

9 helical membrane-spanning segments follow: residues 15-35, 61-81, 88-108, 112-132, 146-166, 184-204, 240-260, 274-294, and 302-322; these read WLLC…CAGE, LAVL…QALF, PGLL…VLLG, LPNW…TLIL, LLAG…AIYF, GGVD…LLWI, GWMV…GLVI, VLLP…DVVA, and ELPI…WLLL.

The protein belongs to the binding-protein-dependent transport system permease family. FecCD subfamily. As to quaternary structure, the complex is composed of two ATP-binding proteins (BtuD), two transmembrane proteins (BtuC) and a solute-binding protein (BtuF).

The protein resides in the cell inner membrane. Part of the ABC transporter complex BtuCDF involved in vitamin B12 import. Involved in the translocation of the substrate across the membrane. The chain is Vitamin B12 import system permease protein BtuC from Escherichia coli O17:K52:H18 (strain UMN026 / ExPEC).